Reading from the N-terminus, the 709-residue chain is Polyribonucleotide nucleotidyltransferase (709 aa).

Mg(2+)-binding residues include Asp-489 and Asp-495. The KH domain maps to 556–615 (PKIDMIKIDVDKIKVVIGKGGETIDKIIAETGVKIDIDEEGNVSIFSSDQAAIDRTKDII). An S1 motif domain is found at 625–693 (GEVYHAKVVR…DKGRVDASMK (69 aa)).

Belongs to the polyribonucleotide nucleotidyltransferase family. Mg(2+) serves as cofactor.

The protein localises to the cytoplasm. The enzyme catalyses RNA(n+1) + phosphate = RNA(n) + a ribonucleoside 5'-diphosphate. Functionally, involved in mRNA degradation. Catalyzes the phosphorolysis of single-stranded polyribonucleotides processively in the 3'- to 5'-direction. The protein is Polyribonucleotide nucleotidyltransferase of Streptococcus agalactiae serotype V (strain ATCC BAA-611 / 2603 V/R).